The chain runs to 393 residues: Methylthioribose kinase (393 aa).

ATP-binding positions include asparagine 38, lysine 53, and 107 to 109 (EDL). Aspartate 225 contributes to the substrate binding site. 242–244 (DPE) provides a ligand contact to ATP. A substrate-binding site is contributed by arginine 332.

This sequence belongs to the methylthioribose kinase family. In terms of assembly, homodimer.

The enzyme catalyses 5-(methylsulfanyl)-D-ribose + ATP = 5-(methylsulfanyl)-alpha-D-ribose 1-phosphate + ADP + H(+). It participates in amino-acid biosynthesis; L-methionine biosynthesis via salvage pathway; S-methyl-5-thio-alpha-D-ribose 1-phosphate from S-methyl-5'-thioadenosine (hydrolase route): step 2/2. Its function is as follows. Catalyzes the phosphorylation of methylthioribose into methylthioribose-1-phosphate. The chain is Methylthioribose kinase from Bacillus cereus (strain AH187).